Reading from the N-terminus, the 138-residue chain is ATP synthase subunit g, mitochondrial (138 aa).

It belongs to the ATPase g subunit family. F-type ATP synthases have 2 components, the catalytic core F(1) and the membrane-embedded component F(0), linked together by a central stalk and a peripheral stalk. The central stalk, also called rotor shaft, is often seen as part of F(1). The peripheral stalk is seen as part of F(0). F(0) contains the membrane channel next to the rotor. F-type ATP synthases form dimers but each monomer functions independently in ATP generation. The dimer consists of 17 different polypeptides: ATP1 (subunit alpha, 3 molecules per monomer, part of F(1)), ATP2 (subunit beta, 3 copies per monomer, part of F(1)), ATP3 (subunit gamma, part of the central stalk), ATP4 (subunit b, part of the peripheral stalk), ATP5/OSCP (subunit 5/OSCP, part of the peripheral stalk), ATP6 (subunit a, part of the peripheral stalk), ATP7 (subunit d, part of the peripheral stalk), ATP8 (subunit 8, part of the peripheral stalk), OLI1 (subunit c, part of the rotor, 10 molecules per monomer), ATP14 (subunit h, part of the peripheral stalk), ATP15 (subunit epsilon, part of the central stalk), ATP16 (subunit delta, part of the central stalk), ATP17 (subunit f, part of the peripheral stalk), ATP18 (subunit i/j, part of the peripheral stalk), ATP19 (subunit k, dimer-specific, at interface between monomers), ATP20 (subunit g, at interface between monomers), TIM11 (subunit e, at interface between monomers).

It localises to the mitochondrion inner membrane. Functionally, mitochondrial membrane ATP synthase (F(1)F(0) ATP synthase or Complex V) produces ATP from ADP in the presence of a proton gradient across the membrane which is generated by electron transport complexes of the respiratory chain. F-type ATP synthases consist of two structural domains, F(1) - containing the extramembraneous catalytic core, and F(0) - containing the membrane proton channel, linked together by a central stalk and a peripheral stalk. During catalysis, ATP synthesis in the catalytic domain of F(1) is coupled via a rotary mechanism of the central stalk subunits to proton translocation. Part of the complex F(0) domain. Minor subunit located with subunit a/ATP6 in the membrane. Together with subunit e/TIM11, probably contributes to membrane curvature at the site of the ATP synthase dimer, ultimately contributing to formation of cristae. The protein is ATP synthase subunit g, mitochondrial of Yarrowia lipolytica (strain CLIB 122 / E 150) (Yeast).